Reading from the N-terminus, the 363-residue chain is Diheme-cytochrome-encapsulin shell fusion protein (363 aa).

The first 36 residues, 1–36, serve as a signal peptide directing secretion; it reads MVMGILNTFKKVYAVTGFFALLAVFSLSQVGSSAFA. The diheme c-type cytochrome stretch occupies residues 37-74; the sequence is ACAKVDDCFSCHTTQELNAVHKNTPYQGQSCIVCHKAF. Heme is bound by residues Cys-44, Cys-47, His-48, Cys-67, Cys-70, and His-71. The linker stretch occupies residues 75-94; it reads AADDTCSDAKDGRFAKISSE. The tract at residues 95 to 363 is encapsulin domain; sequence ININKEDWNK…KCPQAICTLE (269 aa).

The protein belongs to the encapsulin family. Family 1 subfamily. In terms of assembly, the encapsulin nanocompartment is probably formed by 180 monomers, with the N-terminus (diheme domain) inside. There are 36 pores where the pentamers meet as well as 3-fold axis channels and dimer channels. It depends on heme as a cofactor.

The protein resides in the encapsulin nanocompartment. In terms of biological role, fusion of the shell and cargo protein of a type 1 encapsulin nanocompartment. Protein missing its signal peptide makes 33 nm particles in E.coli (called cEnc), protein missing its signal peptide and diheme domain (residues 1-86, called Enc) makes 29 nm particles. The cEnc nancompartment encloses c-type heme. The cargo protein NIR-HAO (AC P0DV45) is probably targeted to the nanocompartment by its association with the diheme domain in cEnc; removal of the diheme domain in Enc halves the amount of cargo. This Kuenenia stuttgartiensis protein is Diheme-cytochrome-encapsulin shell fusion protein.